The sequence spans 157 residues: Crossover junction endodeoxyribonuclease RuvC (157 aa).

Active-site residues include aspartate 7, glutamate 67, and aspartate 139. Aspartate 7, glutamate 67, and aspartate 139 together coordinate Mg(2+).

This sequence belongs to the RuvC family. Homodimer which binds Holliday junction (HJ) DNA. The HJ becomes 2-fold symmetrical on binding to RuvC with unstacked arms; it has a different conformation from HJ DNA in complex with RuvA. In the full resolvosome a probable DNA-RuvA(4)-RuvB(12)-RuvC(2) complex forms which resolves the HJ. It depends on Mg(2+) as a cofactor.

It localises to the cytoplasm. The catalysed reaction is Endonucleolytic cleavage at a junction such as a reciprocal single-stranded crossover between two homologous DNA duplexes (Holliday junction).. Its function is as follows. The RuvA-RuvB-RuvC complex processes Holliday junction (HJ) DNA during genetic recombination and DNA repair. Endonuclease that resolves HJ intermediates. Cleaves cruciform DNA by making single-stranded nicks across the HJ at symmetrical positions within the homologous arms, yielding a 5'-phosphate and a 3'-hydroxyl group; requires a central core of homology in the junction. The consensus cleavage sequence is 5'-(A/T)TT(C/G)-3'. Cleavage occurs on the 3'-side of the TT dinucleotide at the point of strand exchange. HJ branch migration catalyzed by RuvA-RuvB allows RuvC to scan DNA until it finds its consensus sequence, where it cleaves and resolves the cruciform DNA. In Prochlorococcus marinus (strain MIT 9312), this protein is Crossover junction endodeoxyribonuclease RuvC.